A 315-amino-acid polypeptide reads, in one-letter code: Ribose-phosphate pyrophosphokinase (315 aa).

Residues 37–39 (DGE) and 96–97 (RQ) contribute to the ATP site. Mg(2+) is bound by residues H131 and D170. K194 is an active-site residue. Residues R196, D220, and 224–228 (DTGGT) contribute to the D-ribose 5-phosphate site.

The protein belongs to the ribose-phosphate pyrophosphokinase family. Class I subfamily. Homohexamer. Requires Mg(2+) as cofactor.

It localises to the cytoplasm. The catalysed reaction is D-ribose 5-phosphate + ATP = 5-phospho-alpha-D-ribose 1-diphosphate + AMP + H(+). Its pathway is metabolic intermediate biosynthesis; 5-phospho-alpha-D-ribose 1-diphosphate biosynthesis; 5-phospho-alpha-D-ribose 1-diphosphate from D-ribose 5-phosphate (route I): step 1/1. Functionally, involved in the biosynthesis of the central metabolite phospho-alpha-D-ribosyl-1-pyrophosphate (PRPP) via the transfer of pyrophosphoryl group from ATP to 1-hydroxyl of ribose-5-phosphate (Rib-5-P). The protein is Ribose-phosphate pyrophosphokinase of Salmonella typhi.